Consider the following 219-residue polypeptide: Beta-crystallin B2 (219 aa).

Ala2 carries the post-translational modification N-acetylalanine. An N-terminal arm region spans residues 2-16 (ASEHQMPASKQQPAS). 2 consecutive Beta/gamma crystallin 'Greek key' domains span residues 17–56 (PNIA…LVHS) and 57–101 (GPWV…RPIK). Positions 102 to 120 (VVRAPRQPLPTRQTKDSQE) are connecting peptide. 2 Beta/gamma crystallin 'Greek key' domains span residues 121–162 (HKIV…RVQS) and 163–205 (GTWV…RRIR). The C-terminal arm stretch occupies residues 207-219 (MQWHQRGAYHPSN).

Belongs to the beta/gamma-crystallin family. Homo/heterodimer, or complexes of higher-order. The structure of beta-crystallin oligomers seems to be stabilized through interactions between the N-terminal arms.

Its function is as follows. Crystallins are the dominant structural components of the vertebrate eye lens. The protein is Beta-crystallin B2 (CRYBB2) of Gallus gallus (Chicken).